A 265-amino-acid polypeptide reads, in one-letter code: 3-methyl-2-oxobutanoate hydroxymethyltransferase (265 aa).

Mg(2+) is bound by residues Asp46 and Asp85. 3-methyl-2-oxobutanoate contacts are provided by residues 46-47 (DS), Asp85, and Lys114. Position 116 (Glu116) interacts with Mg(2+). Catalysis depends on Glu183, which acts as the Proton acceptor.

It belongs to the PanB family. In terms of assembly, homodecamer; pentamer of dimers. Mg(2+) serves as cofactor.

The protein resides in the cytoplasm. The catalysed reaction is 3-methyl-2-oxobutanoate + (6R)-5,10-methylene-5,6,7,8-tetrahydrofolate + H2O = 2-dehydropantoate + (6S)-5,6,7,8-tetrahydrofolate. Its pathway is cofactor biosynthesis; coenzyme A biosynthesis. Its function is as follows. Catalyzes the reversible reaction in which hydroxymethyl group from 5,10-methylenetetrahydrofolate is transferred onto alpha-ketoisovalerate to form ketopantoate. The protein is 3-methyl-2-oxobutanoate hydroxymethyltransferase of Caldivirga maquilingensis (strain ATCC 700844 / DSM 13496 / JCM 10307 / IC-167).